Consider the following 498-residue polypeptide: MRINPTTSVPGVSTLEEKNLGRIAQIIGPVLDVAFPPGKMPNIYNALVVKGRDTVGQQINVTCEVQQLLGNNRVRTVAMSATDGLMRGMEVIDTGAPLSVPVGGATLGRIFNVLGEPVDNLGPVDTRTTSPIHRSAPAFIQLDTRLSIFETGIKVVDLLAPYRRGGKIGLFGGAGVGKTVLIMELINNIAKAHGGVSVFGGVGERTREGNDLYMEMKESGVINEQNLAESKVALVYGQXXEPPGARMRVGLTALTMAEYFRDVXEQDVLLFIDNIFRFVQAGSEVSALLGRMPSAVGYQPTLSTEMGSLQERITSTKEGSITSIQAVYVPADDLTDPAPATTFAHLDATTVLSRGLAXKGIYPAVDPLDSTSTMLQPRIVGEEHYETAQRVKQTSQRYKELQDIIAILGLDELSEEDRLTVARARKIERFLSQPFFVAEVFTGSPGKYVGLAETIRGFQLILSGELDGLPEQAFYLVGNIDEATAKAINLDEESKLKK.

ATP is bound at residue 172 to 179; it reads GGAGVGKT.

The protein belongs to the ATPase alpha/beta chains family. In terms of assembly, F-type ATPases have 2 components, CF(1) - the catalytic core - and CF(0) - the membrane proton channel. CF(1) has five subunits: alpha(3), beta(3), gamma(1), delta(1), epsilon(1). CF(0) has four main subunits: a(1), b(1), b'(1) and c(9-12).

It localises to the plastid. The protein resides in the chloroplast thylakoid membrane. The catalysed reaction is ATP + H2O + 4 H(+)(in) = ADP + phosphate + 5 H(+)(out). In terms of biological role, produces ATP from ADP in the presence of a proton gradient across the membrane. The catalytic sites are hosted primarily by the beta subunits. The sequence is that of ATP synthase subunit beta, chloroplastic from Asarum canadense (Wild ginger).